Here is a 356-residue protein sequence, read N- to C-terminus: Phospho-2-dehydro-3-deoxyheptonate aldolase, Tyr-sensitive (356 aa).

The protein belongs to the class-I DAHP synthase family.

The enzyme catalyses D-erythrose 4-phosphate + phosphoenolpyruvate + H2O = 7-phospho-2-dehydro-3-deoxy-D-arabino-heptonate + phosphate. The protein operates within metabolic intermediate biosynthesis; chorismate biosynthesis; chorismate from D-erythrose 4-phosphate and phosphoenolpyruvate: step 1/7. In terms of biological role, stereospecific condensation of phosphoenolpyruvate (PEP) and D-erythrose-4-phosphate (E4P) giving rise to 3-deoxy-D-arabino-heptulosonate-7-phosphate (DAHP). The polypeptide is Phospho-2-dehydro-3-deoxyheptonate aldolase, Tyr-sensitive (aroF) (Salmonella typhi).